A 120-amino-acid polypeptide reads, in one-letter code: Seripauperin-10 (120 aa).

A signal peptide spans 1–20; the sequence is MVKLTSIAAGVAAIAATASA.

This sequence belongs to the SRP1/TIP1 family. Seripauperin subfamily.

The sequence is that of Seripauperin-10 (PAU10) from Saccharomyces cerevisiae (strain ATCC 204508 / S288c) (Baker's yeast).